The following is a 768-amino-acid chain: DNA ligase (768 aa).

NAD(+)-binding positions include 61–65, 110–111, and Glu146; these read DAEFD and SL. Lys148 functions as the N6-AMP-lysine intermediate in the catalytic mechanism. 4 residues coordinate NAD(+): Arg169, Glu206, Lys322, and Lys346. Zn(2+)-binding residues include Cys443, Cys446, Cys462, and Cys468. The BRCT domain occupies 661-750; sequence SVPRTLEGLT…PAQTGTEAEA (90 aa). A disordered region spans residues 739 to 768; sequence NGPAQTGTEAEAATDEATVVDETAAEAATE. Low complexity predominate over residues 746 to 768; sequence TEAEAATDEATVVDETAAEAATE.

This sequence belongs to the NAD-dependent DNA ligase family. LigA subfamily. Mg(2+) is required as a cofactor. It depends on Mn(2+) as a cofactor.

The enzyme catalyses NAD(+) + (deoxyribonucleotide)n-3'-hydroxyl + 5'-phospho-(deoxyribonucleotide)m = (deoxyribonucleotide)n+m + AMP + beta-nicotinamide D-nucleotide.. In terms of biological role, DNA ligase that catalyzes the formation of phosphodiester linkages between 5'-phosphoryl and 3'-hydroxyl groups in double-stranded DNA using NAD as a coenzyme and as the energy source for the reaction. It is essential for DNA replication and repair of damaged DNA. The protein is DNA ligase of Paenarthrobacter aurescens (strain TC1).